Here is a 69-residue protein sequence, read N- to C-terminus: Large ribosomal subunit protein uL29 (69 aa).

This sequence belongs to the universal ribosomal protein uL29 family.

The protein is Large ribosomal subunit protein uL29 of Natronomonas pharaonis (strain ATCC 35678 / DSM 2160 / CIP 103997 / JCM 8858 / NBRC 14720 / NCIMB 2260 / Gabara) (Halobacterium pharaonis).